The chain runs to 120 residues: Probable non-functional immunoglobulin kappa variable 2D-24 (120 aa).

Residues 1–19 (MRLLAQLLGLLMLWVPGSS) form the signal peptide. The 101-residue stretch at 20-120 (GDIVMTQTPL…YYCTQATQFP (101 aa)) folds into the Ig-like domain. The tract at residues 21–43 (DIVMTQTPLSSPVTLGQPASISF) is framework-1. The tract at residues 44–59 (RSSQSLVHSDGNTYLS) is complementarity-determining-1. The segment at 60–74 (WLQQRPGQPPRLLIY) is framework-2. Positions 75 to 81 (KVSNRFS) are complementarity-determining-2. The framework-3 stretch occupies residues 82 to 113 (GVPDRFSGSGAGTDFTLKISRVEAEDVGVYYC). Residues 114–120 (TQATQFP) form a complementarity-determining-3 region.

In terms of assembly, most probably, the immunoglobulin is not assembled due to incorrect folding of light chain. Immunoglobulins are composed of two identical heavy chains and two identical light chains; disulfide-linked.

The protein localises to the secreted. Its subcellular location is the cell membrane. Probable non-functional open reading frame (ORF) of V region of the variable domain of immunoglobulin light chains. Non-functional ORF generally cannot participate in the synthesis of a productive immunoglobulin chain due to altered V-(D)-J or switch recombination and/or splicing site (at mRNA level) and/or conserved amino acid change (protein level). Immunoglobulins, also known as antibodies, are membrane-bound or secreted glycoproteins produced by B lymphocytes. In the recognition phase of humoral immunity, the membrane-bound immunoglobulins serve as receptors which, upon binding of a specific antigen, trigger the clonal expansion and differentiation of B lymphocytes into immunoglobulins-secreting plasma cells. Secreted immunoglobulins mediate the effector phase of humoral immunity, which results in the elimination of bound antigens. The antigen binding site is formed by the variable domain of one heavy chain, together with that of its associated light chain. Thus, each immunoglobulin has two antigen binding sites with remarkable affinity for a particular antigen. The variable domains are assembled by a process called V-(D)-J rearrangement and can then be subjected to somatic hypermutations which, after exposure to antigen and selection, allow affinity maturation for a particular antigen. The chain is Probable non-functional immunoglobulin kappa variable 2D-24 from Homo sapiens (Human).